The primary structure comprises 319 residues: Transcriptional regulator LsrR (319 aa).

Residues 32 to 55 (QSEISERLGLTRLKVSRLLEKGHQ) constitute a DNA-binding region (H-T-H motif).

Belongs to the SorC transcriptional regulatory family.

The protein localises to the cytoplasm. Inactivated by phosphorylated autoinducer-2 (phospho-AI-2). Phospho-AI-2 acts by binding to LsrR, which is then unable to bind to the promoter regions, allowing the transcription of the target genes. Its function is as follows. Transcriptional regulator that represses the expression of the lsr operon (lsrACDBFGE) in the absence of the quorum-sensing signaling molecule autoinducer 2 (AI-2). It also represses the expression of the lsrRK operon. Acts by binding to the intergenic region between the lsr operon and lsrR. In the presence of phosphorylated autoinducer-2 (phospho-AI-2), LsrR is inactivated, leading to the transcription of the genes. The regulatory function of LsrR was thought to be limited to the lsr operon, but it was subsequently shown to be involved, directly or indirectly, in the regulation of SPI-1 and flagella genes. It negatively regulates the expression of those genes, which reduces the ability of Salmonella to invade host cells. The protein is Transcriptional regulator LsrR of Salmonella typhimurium (strain LT2 / SGSC1412 / ATCC 700720).